The sequence spans 396 residues: Tryptophan synthase beta chain (396 aa).

Lys88 is modified (N6-(pyridoxal phosphate)lysine).

Belongs to the TrpB family. Tetramer of two alpha and two beta chains. Requires pyridoxal 5'-phosphate as cofactor.

It catalyses the reaction (1S,2R)-1-C-(indol-3-yl)glycerol 3-phosphate + L-serine = D-glyceraldehyde 3-phosphate + L-tryptophan + H2O. It functions in the pathway amino-acid biosynthesis; L-tryptophan biosynthesis; L-tryptophan from chorismate: step 5/5. In terms of biological role, the beta subunit is responsible for the synthesis of L-tryptophan from indole and L-serine. This Actinobacillus pleuropneumoniae serotype 7 (strain AP76) protein is Tryptophan synthase beta chain.